A 324-amino-acid chain; its full sequence is Glyoxylate/hydroxypyruvate reductase B (324 aa).

Residues Arg237 and Glu266 contribute to the active site. The Proton donor role is filled by His285.

It belongs to the D-isomer specific 2-hydroxyacid dehydrogenase family. GhrB subfamily. In terms of assembly, homodimer.

The protein resides in the cytoplasm. It catalyses the reaction glycolate + NADP(+) = glyoxylate + NADPH + H(+). The enzyme catalyses (R)-glycerate + NAD(+) = 3-hydroxypyruvate + NADH + H(+). It carries out the reaction (R)-glycerate + NADP(+) = 3-hydroxypyruvate + NADPH + H(+). In terms of biological role, catalyzes the NADPH-dependent reduction of glyoxylate and hydroxypyruvate into glycolate and glycerate, respectively. This chain is Glyoxylate/hydroxypyruvate reductase B, found in Escherichia coli (strain SMS-3-5 / SECEC).